A 204-amino-acid chain; its full sequence is Translation initiation factor 2 subunit beta (204 aa).

In terms of domain architecture, TRAM spans 146–204; sequence AIEEGKELEVHIESISKKGDGVARIGKYILYVAGTKAGQNVKVRITRISGQVAFTQKIL.

Belongs to the eIF-2-beta/eIF-5 family. In terms of assembly, heterotrimer composed of an alpha, a beta and a gamma chain.

In terms of biological role, eIF-2 functions in the early steps of protein synthesis by forming a ternary complex with GTP and initiator tRNA. In Methanocorpusculum labreanum (strain ATCC 43576 / DSM 4855 / Z), this protein is Translation initiation factor 2 subunit beta.